We begin with the raw amino-acid sequence, 335 residues long: Fructose-1,6-bisphosphatase class 1 (335 aa).

Residues E91, D113, L115, and D116 each contribute to the Mg(2+) site. Substrate is bound by residues 116–119, N208, and K274; that span reads DGSS. Residue E280 participates in Mg(2+) binding.

Belongs to the FBPase class 1 family. Homotetramer. The cofactor is Mg(2+).

The protein resides in the cytoplasm. The catalysed reaction is beta-D-fructose 1,6-bisphosphate + H2O = beta-D-fructose 6-phosphate + phosphate. Its pathway is carbohydrate biosynthesis; gluconeogenesis. The polypeptide is Fructose-1,6-bisphosphatase class 1 (Chromobacterium violaceum (strain ATCC 12472 / DSM 30191 / JCM 1249 / CCUG 213 / NBRC 12614 / NCIMB 9131 / NCTC 9757 / MK)).